The chain runs to 635 residues: Threonine--tRNA ligase (635 aa).

One can recognise a TGS domain in the interval methionine 1–threonine 62. The tract at residues aspartate 244–proline 535 is catalytic. Residues cysteine 335, histidine 386, and histidine 512 each coordinate Zn(2+).

Belongs to the class-II aminoacyl-tRNA synthetase family. Homodimer. Requires Zn(2+) as cofactor.

The protein localises to the cytoplasm. It carries out the reaction tRNA(Thr) + L-threonine + ATP = L-threonyl-tRNA(Thr) + AMP + diphosphate + H(+). Catalyzes the attachment of threonine to tRNA(Thr) in a two-step reaction: L-threonine is first activated by ATP to form Thr-AMP and then transferred to the acceptor end of tRNA(Thr). Also edits incorrectly charged L-seryl-tRNA(Thr). This is Threonine--tRNA ligase from Xylella fastidiosa (strain M12).